Here is a 364-residue protein sequence, read N- to C-terminus: tRNA 2-selenouridine synthase (364 aa).

The region spanning Leu14–Trp137 is the Rhodanese domain. The active-site S-selanylcysteine intermediate is the Cys97.

It belongs to the SelU family. As to quaternary structure, monomer.

The catalysed reaction is 5-methylaminomethyl-2-thiouridine(34) in tRNA + selenophosphate + (2E)-geranyl diphosphate + H2O + H(+) = 5-methylaminomethyl-2-selenouridine(34) in tRNA + (2E)-thiogeraniol + phosphate + diphosphate. It carries out the reaction 5-methylaminomethyl-2-thiouridine(34) in tRNA + (2E)-geranyl diphosphate = 5-methylaminomethyl-S-(2E)-geranyl-thiouridine(34) in tRNA + diphosphate. It catalyses the reaction 5-methylaminomethyl-S-(2E)-geranyl-thiouridine(34) in tRNA + selenophosphate + H(+) = 5-methylaminomethyl-2-(Se-phospho)selenouridine(34) in tRNA + (2E)-thiogeraniol. The enzyme catalyses 5-methylaminomethyl-2-(Se-phospho)selenouridine(34) in tRNA + H2O = 5-methylaminomethyl-2-selenouridine(34) in tRNA + phosphate. Its function is as follows. Involved in the post-transcriptional modification of the uridine at the wobble position (U34) of tRNA(Lys), tRNA(Glu) and tRNA(Gln). Catalyzes the conversion of 2-thiouridine (S2U-RNA) to 2-selenouridine (Se2U-RNA). Acts in a two-step process involving geranylation of 2-thiouridine (S2U) to S-geranyl-2-thiouridine (geS2U) and subsequent selenation of the latter derivative to 2-selenouridine (Se2U) in the tRNA chain. This is tRNA 2-selenouridine synthase from Salmonella agona (strain SL483).